The sequence spans 61 residues: Small ribosomal subunit protein uS14B (61 aa).

C24, C27, C40, and C43 together coordinate Zn(2+).

Belongs to the universal ribosomal protein uS14 family. Zinc-binding uS14 subfamily. Part of the 30S ribosomal subunit. Contacts proteins S3 and S10. It depends on Zn(2+) as a cofactor.

Functionally, binds 16S rRNA, required for the assembly of 30S particles and may also be responsible for determining the conformation of the 16S rRNA at the A site. This Saccharopolyspora erythraea (strain ATCC 11635 / DSM 40517 / JCM 4748 / NBRC 13426 / NCIMB 8594 / NRRL 2338) protein is Small ribosomal subunit protein uS14B.